A 38-amino-acid chain; its full sequence is Glucagon-like peptide (38 aa).

This sequence belongs to the glucagon family.

It localises to the secreted. The protein is Glucagon-like peptide of Hydrolagus colliei (Spotted ratfish).